Consider the following 371-residue polypeptide: Probable dual-specificity RNA methyltransferase RlmN (371 aa).

The active-site Proton acceptor is Glu114. The 227-residue stretch at 120–346 (DGPRRSICVS…ESAGVNVNFR (227 aa)) folds into the Radical SAM core domain. Residues Cys127 and Cys357 are joined by a disulfide bond. [4Fe-4S] cluster is bound by residues Cys134, Cys138, and Cys141. S-adenosyl-L-methionine contacts are provided by residues 183–184 (GE), Ser215, 238–240 (SLH), and Asn314. The active-site S-methylcysteine intermediate is Cys357.

The protein belongs to the radical SAM superfamily. RlmN family. [4Fe-4S] cluster serves as cofactor.

The protein localises to the cytoplasm. It catalyses the reaction adenosine(2503) in 23S rRNA + 2 reduced [2Fe-2S]-[ferredoxin] + 2 S-adenosyl-L-methionine = 2-methyladenosine(2503) in 23S rRNA + 5'-deoxyadenosine + L-methionine + 2 oxidized [2Fe-2S]-[ferredoxin] + S-adenosyl-L-homocysteine. It carries out the reaction adenosine(37) in tRNA + 2 reduced [2Fe-2S]-[ferredoxin] + 2 S-adenosyl-L-methionine = 2-methyladenosine(37) in tRNA + 5'-deoxyadenosine + L-methionine + 2 oxidized [2Fe-2S]-[ferredoxin] + S-adenosyl-L-homocysteine. Specifically methylates position 2 of adenine 2503 in 23S rRNA and position 2 of adenine 37 in tRNAs. This Rhodopirellula baltica (strain DSM 10527 / NCIMB 13988 / SH1) protein is Probable dual-specificity RNA methyltransferase RlmN.